Reading from the N-terminus, the 395-residue chain is Gastric triacylglycerol lipase (395 aa).

The first 18 residues, 1-18 (MWLLLVTSVLSAFGGAHG), serve as a signal peptide directing secretion. The N-linked (GlcNAc...) asparagine glycan is linked to Asn-33. Positions 81–376 (LQHGLIASAT…LPYNHLDFIW (296 aa)) constitute an AB hydrolase-1 domain. The active-site Nucleophile is the Ser-171. Residues Cys-245 and Cys-254 are joined by a disulfide bond. Asn-270 carries an N-linked (GlcNAc...) asparagine glycan. Catalysis depends on charge relay system residues Asp-342 and His-371.

This sequence belongs to the AB hydrolase superfamily. Lipase family.

The protein resides in the secreted. The enzyme catalyses a triacylglycerol + H2O = a diacylglycerol + a fatty acid + H(+). It carries out the reaction 1,2,3-tri-(9Z-octadecenoyl)-glycerol + H2O = 1,2-di-(9Z-octadecenoyl)-sn-glycerol + (9Z)-octadecenoate + H(+). The catalysed reaction is 1,2,3-trioctanoylglycerol + H2O = 1,2-dioctanoyl-sn-glycerol + octanoate + H(+). In terms of biological role, catalyzes the hydrolysis of triacylglycerols to yield free fatty acids, diacylglycerol, monoacylglycerol, and glycerol. Shows a preferential hydrolysis at the sn-3 position of triacylglycerol. This chain is Gastric triacylglycerol lipase (Lipf), found in Mus musculus (Mouse).